A 397-amino-acid chain; its full sequence is NADH-quinone oxidoreductase subunit D (397 aa).

It belongs to the complex I 49 kDa subunit family. NDH-1 is composed of 14 different subunits. Subunits NuoB, C, D, E, F, and G constitute the peripheral sector of the complex.

Its subcellular location is the cell inner membrane. It carries out the reaction a quinone + NADH + 5 H(+)(in) = a quinol + NAD(+) + 4 H(+)(out). In terms of biological role, NDH-1 shuttles electrons from NADH, via FMN and iron-sulfur (Fe-S) centers, to quinones in the respiratory chain. The immediate electron acceptor for the enzyme in this species is believed to be ubiquinone. Couples the redox reaction to proton translocation (for every two electrons transferred, four hydrogen ions are translocated across the cytoplasmic membrane), and thus conserves the redox energy in a proton gradient. The chain is NADH-quinone oxidoreductase subunit D from Magnetococcus marinus (strain ATCC BAA-1437 / JCM 17883 / MC-1).